The primary structure comprises 156 residues: 6,7-dimethyl-8-ribityllumazine synthase (156 aa).

5-amino-6-(D-ribitylamino)uracil contacts are provided by residues phenylalanine 23, 57–59 (AFE), and 81–83 (TVI). 86-87 (ST) contributes to the (2S)-2-hydroxy-3-oxobutyl phosphate binding site. Histidine 89 (proton donor) is an active-site residue. Position 114 (phenylalanine 114) interacts with 5-amino-6-(D-ribitylamino)uracil. Residue arginine 128 coordinates (2S)-2-hydroxy-3-oxobutyl phosphate.

It belongs to the DMRL synthase family. As to quaternary structure, forms an icosahedral capsid composed of 60 subunits, arranged as a dodecamer of pentamers.

It carries out the reaction (2S)-2-hydroxy-3-oxobutyl phosphate + 5-amino-6-(D-ribitylamino)uracil = 6,7-dimethyl-8-(1-D-ribityl)lumazine + phosphate + 2 H2O + H(+). It participates in cofactor biosynthesis; riboflavin biosynthesis; riboflavin from 2-hydroxy-3-oxobutyl phosphate and 5-amino-6-(D-ribitylamino)uracil: step 1/2. Functionally, catalyzes the formation of 6,7-dimethyl-8-ribityllumazine by condensation of 5-amino-6-(D-ribitylamino)uracil with 3,4-dihydroxy-2-butanone 4-phosphate. This is the penultimate step in the biosynthesis of riboflavin. This is 6,7-dimethyl-8-ribityllumazine synthase from Halalkalibacterium halodurans (strain ATCC BAA-125 / DSM 18197 / FERM 7344 / JCM 9153 / C-125) (Bacillus halodurans).